Consider the following 471-residue polypeptide: Galactolipase DONGLE, chloroplastic (471 aa).

Residues 1–88 (MAAKVFTQNP…PLSRVWREIQ (88 aa)) constitute a chloroplast transit peptide. Residues 44–71 (SSSTMSPPISSSPLSLPSSSSSQAIPPS) form a disordered region. Positions 284–288 (GHSMG) match the GXSXG motif. Catalysis depends on Ser286, which acts as the Acyl-ester intermediate. Residues Asp349 and His400 each act as charge relay system in the active site.

It belongs to the AB hydrolase superfamily. Lipase family. Expressed in leaves and seedlings. Not detected in flowers, siliques or roots.

It is found in the plastid. The protein resides in the chloroplast. It catalyses the reaction a 1,2-diacyl-3-O-(beta-D-galactosyl)-sn-glycerol + 2 H2O = 3-beta-D-galactosyl-sn-glycerol + 2 a fatty acid + 2 H(+). The catalysed reaction is a 1,2-diacyl-sn-glycero-3-phosphocholine + H2O = a 2-acyl-sn-glycero-3-phosphocholine + a fatty acid + H(+). The enzyme catalyses a 1,2-diacyl-3-O-[alpha-D-galactosyl-(1-&gt;6)-beta-D-galactosyl]-sn-glycerol + H2O = acyl-3-O-[alpha-D-galactosyl-(1-&gt;6)-beta-D-galactosyl]-sn-glycerol + a fatty acid + H(+). Sn-1-specific phospholipase that releases free fatty acids from phosphatidylcholine. Has a higher galactolipase activity than phospholipase A1 activity when digalactosyldiacylglycerol (DGDG) is used as substrate. Catalyzes the initial step of jasmonic acid biosynthesis. Required for the biosynthesis of basal-level endogenous jasmonate in vegetative tissues. Regulates leaves growth. Not essential for jasmonate biosynthesis after wounding or upon pathogen infection. This is Galactolipase DONGLE, chloroplastic from Arabidopsis thaliana (Mouse-ear cress).